Consider the following 547-residue polypeptide: Alpha-humulene/(-)-(E)-beta-caryophyllene synthase (547 aa).

Residues arginine 262, aspartate 299, aspartate 303, arginine 442, and aspartate 445 each contribute to the (2E,6E)-farnesyl diphosphate site. Aspartate 299 and aspartate 303 together coordinate Mg(2+). The DDXXD motif signature appears at 299–303 (DDMYD). The Mg(2+) site is built by aspartate 445, aspartate 446, serine 449, and glutamate 453.

Belongs to the terpene synthase family. Tpsa subfamily. As to quaternary structure, monomer. Mg(2+) is required as a cofactor. Mn(2+) serves as cofactor. In terms of tissue distribution, expressed exclusively in flowers. Expressed in the flower stigmata and also detected in the mesocarp cell layers of the silique wall.

It is found in the cytoplasm. It carries out the reaction (2E,6E)-farnesyl diphosphate = (-)-(E)-beta-caryophyllene + diphosphate. The enzyme catalyses (2E,6E)-farnesyl diphosphate = alpha-copaene + diphosphate. The catalysed reaction is (2E,6E)-farnesyl diphosphate = alpha-humulene + diphosphate. It catalyses the reaction (2E,6E)-farnesyl diphosphate = (1S,2S,4R)-beta-elemene + diphosphate. The protein operates within secondary metabolite biosynthesis; terpenoid biosynthesis. Its function is as follows. Involved in sesquiterpene (C15) biosynthesis. The major products are beta-caryophyllene and alpha-humulene. Does not convert geranyl diphosphate (GPP) to any monoterpenes. The polypeptide is Alpha-humulene/(-)-(E)-beta-caryophyllene synthase (Arabidopsis thaliana (Mouse-ear cress)).